Reading from the N-terminus, the 336-residue chain is Aspartate--ammonia ligase (336 aa).

Belongs to the class-II aminoacyl-tRNA synthetase family. AsnA subfamily.

The protein resides in the cytoplasm. The enzyme catalyses L-aspartate + NH4(+) + ATP = L-asparagine + AMP + diphosphate + H(+). It participates in amino-acid biosynthesis; L-asparagine biosynthesis; L-asparagine from L-aspartate (ammonia route): step 1/1. The protein is Aspartate--ammonia ligase of Ruminiclostridium cellulolyticum (strain ATCC 35319 / DSM 5812 / JCM 6584 / H10) (Clostridium cellulolyticum).